The chain runs to 224 residues: Adenylate kinase (224 aa).

10–15 contributes to the ATP binding site; it reads GSGKST. Positions 30-59 are NMP; sequence SSGDLIRREIERKSSLGREMEAYLSRGDLI. Residues serine 31, arginine 36, 57–59, 83–86, and glutamine 90 each bind AMP; these read DLI and GYPR. Residues 124–161 form an LID region; sequence GRRICPNCGAVYHVKYNPPKVPGICDVCGSELIQRADD. An ATP-binding site is contributed by arginine 125. Residues cysteine 128 and cysteine 131 each contribute to the Zn(2+) site. 134–135 contacts ATP; sequence VY. The Zn(2+) site is built by cysteine 148 and cysteine 151. The AMP site is built by arginine 158 and arginine 169. Residue glycine 197 participates in ATP binding.

The protein belongs to the adenylate kinase family. As to quaternary structure, monomer.

It is found in the cytoplasm. It catalyses the reaction AMP + ATP = 2 ADP. It participates in purine metabolism; AMP biosynthesis via salvage pathway; AMP from ADP: step 1/1. Functionally, catalyzes the reversible transfer of the terminal phosphate group between ATP and AMP. Plays an important role in cellular energy homeostasis and in adenine nucleotide metabolism. The sequence is that of Adenylate kinase from Thermococcus kodakarensis (strain ATCC BAA-918 / JCM 12380 / KOD1) (Pyrococcus kodakaraensis (strain KOD1)).